Consider the following 191-residue polypeptide: Protein GrpE (191 aa).

Basic and acidic residues predominate over residues 1-10; the sequence is MNHEEQKVET. The disordered stretch occupies residues 1-28; it reads MNHEEQKVETMEQVEAQPVEPTDVDSEV.

Belongs to the GrpE family. In terms of assembly, homodimer.

Its subcellular location is the cytoplasm. Its function is as follows. Participates actively in the response to hyperosmotic and heat shock by preventing the aggregation of stress-denatured proteins, in association with DnaK and GrpE. It is the nucleotide exchange factor for DnaK and may function as a thermosensor. Unfolded proteins bind initially to DnaJ; upon interaction with the DnaJ-bound protein, DnaK hydrolyzes its bound ATP, resulting in the formation of a stable complex. GrpE releases ADP from DnaK; ATP binding to DnaK triggers the release of the substrate protein, thus completing the reaction cycle. Several rounds of ATP-dependent interactions between DnaJ, DnaK and GrpE are required for fully efficient folding. This chain is Protein GrpE, found in Aeromonas salmonicida (strain A449).